Consider the following 302-residue polypeptide: Zinc import ATP-binding protein ZnuC (302 aa).

Positions 13-228 (VSLANAGVRR…PEYLKLFGRR (216 aa)) constitute an ABC transporter domain. 45–52 (GPNGSGKS) lines the ATP pocket.

Belongs to the ABC transporter superfamily. Zinc importer (TC 3.A.1.15.5) family. As to quaternary structure, the complex is composed of two ATP-binding proteins (ZnuC), two transmembrane proteins (ZnuB) and a solute-binding protein (ZnuA).

Its subcellular location is the cell inner membrane. It carries out the reaction Zn(2+)(out) + ATP(in) + H2O(in) = Zn(2+)(in) + ADP(in) + phosphate(in) + H(+)(in). Part of the ABC transporter complex ZnuABC involved in zinc import. Responsible for energy coupling to the transport system. This is Zinc import ATP-binding protein ZnuC from Rhizobium meliloti (strain 1021) (Ensifer meliloti).